The sequence spans 156 residues: Protein eva-1 homolog A (156 aa).

A helical membrane pass occupies residues 40–60 (ALYFVSGVCIGLFLTLAALVM). The disordered stretch occupies residues 79-100 (DRECSDSSDSEDGSEDTASDLS). A compositionally biased stretch (acidic residues) spans 84 to 96 (DSSDSEDGSEDTA). Residue Thr-110 is modified to Phosphothreonine. Position 118 is a phosphoserine (Ser-118).

The protein belongs to the EVA1 family.

Its subcellular location is the endoplasmic reticulum membrane. The protein resides in the lysosome membrane. Acts as a regulator of programmed cell death, mediating both autophagy and apoptosis. The sequence is that of Protein eva-1 homolog A (Eva1a) from Mus musculus (Mouse).